We begin with the raw amino-acid sequence, 125 residues long: Large ribosomal subunit protein bL12 (125 aa).

The protein belongs to the bacterial ribosomal protein bL12 family. Homodimer. Part of the ribosomal stalk of the 50S ribosomal subunit. Forms a multimeric L10(L12)X complex, where L10 forms an elongated spine to which 2 to 4 L12 dimers bind in a sequential fashion. Binds GTP-bound translation factors.

Functionally, forms part of the ribosomal stalk which helps the ribosome interact with GTP-bound translation factors. Is thus essential for accurate translation. The chain is Large ribosomal subunit protein bL12 from Campylobacter jejuni subsp. jejuni serotype O:6 (strain 81116 / NCTC 11828).